Here is a 151-residue protein sequence, read N- to C-terminus: UPF0756 membrane protein Moth_0120 (151 aa).

4 helical membrane-spanning segments follow: residues 6–26, 52–72, 75–95, and 111–131; these read VILILLMLLGILGRSNVIAAA, AGLIFLVVSVLVPFASGRVAP, MLQSFVSLPGLIAIASGIIAT, and MMIGMVIGSIIGVAFFGGIPV.

The protein belongs to the UPF0756 family.

It is found in the cell membrane. This is UPF0756 membrane protein Moth_0120 from Moorella thermoacetica (strain ATCC 39073 / JCM 9320).